A 677-amino-acid polypeptide reads, in one-letter code: Methionine--tRNA ligase (677 aa).

The 'HIGH' region signature appears at 15-25; that stretch reads PYANGSIHLGH. Positions 146, 149, 159, and 162 each coordinate Zn(2+). The short motif at 333–337 is the 'KMSKS' region element; sequence KMSKS. Lysine 336 provides a ligand contact to ATP. In terms of domain architecture, tRNA-binding spans 575–677; the sequence is DFAKVDLRVA…DGAKPGQQVK (103 aa).

The protein belongs to the class-I aminoacyl-tRNA synthetase family. MetG type 1 subfamily. As to quaternary structure, homodimer. The cofactor is Zn(2+).

Its subcellular location is the cytoplasm. The catalysed reaction is tRNA(Met) + L-methionine + ATP = L-methionyl-tRNA(Met) + AMP + diphosphate. Its function is as follows. Is required not only for elongation of protein synthesis but also for the initiation of all mRNA translation through initiator tRNA(fMet) aminoacylation. The polypeptide is Methionine--tRNA ligase (Klebsiella pneumoniae subsp. pneumoniae (strain ATCC 700721 / MGH 78578)).